Reading from the N-terminus, the 893-residue chain is AP-4 complex accessory subunit RUSC1 (893 aa).

4 disordered regions span residues 31-223 (ELRE…GKAE), 237-332 (EKTE…KDRS), 339-358 (SPDT…APPR), and 366-444 (LRSR…RAHA). Residues 77–87 (HGSSIENQQDP) are compositionally biased toward polar residues. Low complexity-rich tracts occupy residues 95–117 (SPSD…DESP) and 149–165 (PSTC…DSCS). The span at 177–187 (SNCNALTTCQD) shows a compositional bias: polar residues. Over residues 237–257 (EKTEAGWKTIEDSDSGRKTDE) the composition is skewed to basic and acidic residues. 2 stretches are compositionally biased toward pro residues: residues 373 to 382 (QPPPVPPRDP) and 390 to 399 (PPRPPPPPVP). The tract at residues 463–598 (MAEAQSGTGQ…FHAFILGLLN (136 aa)) is interaction with TRAF6. The RUN domain occupies 515–659 (DVGHLVLTTL…LTFHLDLLFE (145 aa)). The interval 599–665 (TKQLELWFSS…LLFEHHHHLP (67 aa)) is interaction with IKBKG. Disordered stretches follow at residues 700–721 (RGTS…PAGS) and 751–772 (HGTT…TPGR). Composition is skewed to low complexity over residues 702-714 (TSGE…STPS) and 754-770 (TAEA…QTTP). One can recognise an SH3 domain in the interval 835–893 (QADRAVRALCDHTAAGPDQLSFQRGELLRVIATVDEDWLRCGRDGVEGLVPVGYTSLVL).

As to quaternary structure, associated component of the adapter-like complex 4 (AP-4). Interacts with IKBKG and TRAF6. Interacts with F-actin, acetylated actin, TUBB3, STX1A, KIF5B and KLC1. Phosphorylated on serine residues following nuclear translocation. In terms of processing, polyubiquitinated; polyubiquitination involves TRAF6. In terms of tissue distribution, expressed in brain, brain stem and spinal cord (at protein level).

It localises to the cytoplasm. The protein resides in the nucleus. It is found in the cytoskeleton. The protein localises to the cytoplasmic vesicle. Its subcellular location is the early endosome. It localises to the postsynaptic density. The protein resides in the golgi apparatus. Functionally, associates with the adapter-like complex 4 (AP-4) and may therefore play a role in vesicular trafficking of proteins at the trans-Golgi network. Signaling adapter which plays a role in neuronal differentiation. Involved in regulation of NGF-dependent neurite outgrowth. May play a role in neuronal vesicular trafficking, specifically involving pre-synaptic membrane proteins. Seems to be involved in signaling pathways that are regulated by the prolonged activation of MAPK. Can regulate the polyubiquitination of IKBKG and thus may be involved in regulation of the NF-kappa-B pathway. The polypeptide is AP-4 complex accessory subunit RUSC1 (Mus musculus (Mouse)).